We begin with the raw amino-acid sequence, 377 residues long: 8-amino-7-oxononanoate synthase (377 aa).

A substrate-binding site is contributed by Arg-13. 100-101 (GY) serves as a coordination point for pyridoxal 5'-phosphate. His-125 serves as a coordination point for substrate. Pyridoxal 5'-phosphate-binding residues include Ser-171, His-199, and Thr-228. Residue Lys-231 is modified to N6-(pyridoxal phosphate)lysine. A substrate-binding site is contributed by Thr-345.

This sequence belongs to the class-II pyridoxal-phosphate-dependent aminotransferase family. BioF subfamily. In terms of assembly, homodimer. It depends on pyridoxal 5'-phosphate as a cofactor.

The catalysed reaction is 6-carboxyhexanoyl-[ACP] + L-alanine + H(+) = (8S)-8-amino-7-oxononanoate + holo-[ACP] + CO2. The protein operates within cofactor biosynthesis; biotin biosynthesis. Catalyzes the decarboxylative condensation of pimeloyl-[acyl-carrier protein] and L-alanine to produce 8-amino-7-oxononanoate (AON), [acyl-carrier protein], and carbon dioxide. This is 8-amino-7-oxononanoate synthase from Nitrosococcus oceani (strain ATCC 19707 / BCRC 17464 / JCM 30415 / NCIMB 11848 / C-107).